The chain runs to 37 residues: Photosystem II reaction center protein Psb30 (37 aa).

A helical transmembrane segment spans residues 10 to 30; the sequence is LISLLLLTLIMLAGPAVIALW.

This sequence belongs to the Psb30/Ycf12 family. As to quaternary structure, PSII is composed of 1 copy each of membrane proteins PsbA, PsbB, PsbC, PsbD, PsbE, PsbF, PsbH, PsbI, PsbJ, PsbK, PsbL, PsbM, PsbT, PsbX, Psb30/Ycf12, peripheral proteins PsbO, CyanoQ (PsbQ), PsbU, PsbV and a large number of cofactors. It forms dimeric complexes.

The protein resides in the cell inner membrane. Functionally, a core subunit of photosystem II (PSII), probably helps stabilize the reaction center. The chain is Photosystem II reaction center protein Psb30 from Gloeobacter violaceus (strain ATCC 29082 / PCC 7421).